We begin with the raw amino-acid sequence, 339 residues long: MQANGFSFGFYDEPNNLNGQDVGADSLPSVAIESDSLGHMLKYIPEKLSYARVSGLGHTFVQRELWDVKMQLMEQDDSIESDDKLKVLDGCNDLVPNVYEGGYKTWECSLDLANEIKKIDVVKNNLTTVLELGCGSAIPILSCFQEFYKHRIPCTLVFQDFNVDVLRYVTLPNLLLNWYFCTQEHDSSEKHGTIDVSPSLLQEFSDDLARTNIYCEFLCGCWSEEMQLLIQRTYGDHYFSLVLASETIYSLPSLENFLYMLLKNTKNLALVAGKDLYFGVGGSILEFNSRLQKLVDDPNSLKAIKTSTQNVGRSIVYWEKEFPPSNIDSSPQSPLPGSL.

Phosphoserine is present on residues Ser-333 and Ser-338.

The protein belongs to the methyltransferase superfamily. METTL18 family.

It localises to the cytoplasm. The protein resides in the nucleus. It catalyses the reaction L-histidyl-[protein] + S-adenosyl-L-methionine = N(tele)-methyl-L-histidyl-[protein] + S-adenosyl-L-homocysteine + H(+). Protein-histidine N-methyltransferase that mediates methylation of target protein on His residues. The polypeptide is Histidine protein methyltransferase 1 (Schizosaccharomyces pombe (strain 972 / ATCC 24843) (Fission yeast)).